Consider the following 853-residue polypeptide: DNA mismatch repair protein MutS (853 aa).

Residue Gly614–Ser621 participates in ATP binding.

The protein belongs to the DNA mismatch repair MutS family.

Its function is as follows. This protein is involved in the repair of mismatches in DNA. It is possible that it carries out the mismatch recognition step. This protein has a weak ATPase activity. The sequence is that of DNA mismatch repair protein MutS from Escherichia coli O81 (strain ED1a).